The following is a 122-amino-acid chain: Autophagy-related protein 8b (122 aa).

Residue glycine 117 is the site of Phosphatidylethanolamine amidated glycine attachment. Residues 118–122 (GSFYC) constitute a propeptide, removed in mature form.

The protein belongs to the ATG8 family. In terms of assembly, interacts with ATG4. Interacts with NBR1. In terms of processing, the C-terminal 5 residues are removed by ATG4 to expose Gly-117 at the C-terminus. This Gly-117 forms then a thioester bond with the 'Cys-558' of ATG7 (E1-like activating enzyme) before being transferred to the 'Cys-258' of ATG3 (the specific E2 conjugating enzyme), in order to be finally amidated with phosphatidylethanolamine. This lipid modification anchors ATG8 to autophagosomes. As to expression, constitutively expressed.

The protein localises to the cytoplasmic vesicle. It is found in the autophagosome membrane. It localises to the vacuole membrane. Its subcellular location is the cytoplasm. The protein resides in the cytoskeleton. In terms of biological role, ubiquitin-like modifier involved in autophagosomes formation. May mediate the delivery of the autophagosomes to the vacuole via the microtubule cytoskeleton. In Arabidopsis thaliana (Mouse-ear cress), this protein is Autophagy-related protein 8b (ATG8B).